The following is a 206-amino-acid chain: A-type ATP synthase subunit D (206 aa).

The protein belongs to the V-ATPase D subunit family. As to quaternary structure, has multiple subunits with at least A(3), B(3), C, D, E, F, H, I and proteolipid K(x).

The protein localises to the cell membrane. In terms of biological role, component of the A-type ATP synthase that produces ATP from ADP in the presence of a proton gradient across the membrane. This chain is A-type ATP synthase subunit D, found in Methanococcoides burtonii (strain DSM 6242 / NBRC 107633 / OCM 468 / ACE-M).